Reading from the N-terminus, the 125-residue chain is Phosphoribosyl-AMP cyclohydrolase (125 aa).

D74 is a binding site for Mg(2+). C75 provides a ligand contact to Zn(2+). Positions 76 and 78 each coordinate Mg(2+). Residues C92 and C99 each coordinate Zn(2+).

The protein belongs to the PRA-CH family. As to quaternary structure, homodimer. Mg(2+) serves as cofactor. Zn(2+) is required as a cofactor.

It is found in the cytoplasm. It catalyses the reaction 1-(5-phospho-beta-D-ribosyl)-5'-AMP + H2O = 1-(5-phospho-beta-D-ribosyl)-5-[(5-phospho-beta-D-ribosylamino)methylideneamino]imidazole-4-carboxamide. Its pathway is amino-acid biosynthesis; L-histidine biosynthesis; L-histidine from 5-phospho-alpha-D-ribose 1-diphosphate: step 3/9. Functionally, catalyzes the hydrolysis of the adenine ring of phosphoribosyl-AMP. This chain is Phosphoribosyl-AMP cyclohydrolase, found in Desulforapulum autotrophicum (strain ATCC 43914 / DSM 3382 / VKM B-1955 / HRM2) (Desulfobacterium autotrophicum).